Here is a 283-residue protein sequence, read N- to C-terminus: Polyprenyl-phosphate transporter (283 aa).

Transmembrane regions (helical) follow at residues 27 to 47, 51 to 71, 85 to 105, 112 to 132, 148 to 168, 169 to 189, 197 to 217, 230 to 250, and 255 to 275; these read GTIA…SGIF, FWPS…AMGS, IPTM…LLKI, FTTK…VITL, TSLI…MLLP, GISG…MLAI, FAGL…FIIS, LMTF…VFPG, and IVMW…SLTL.

This sequence belongs to the PopT family.

The protein resides in the cell membrane. Its activity is regulated as follows. Active in alkaline conditions. Flippase that catalyzes the transport of undecaprenyl phosphate (UndP) across the cytoplasmic membrane, from the external side to the cytoplasmic side. Is involved in UndP recycling during peptidoglycan synthesis. Necessary for peptidoglycan maintenance. This is Polyprenyl-phosphate transporter from Staphylococcus aureus (strain NCTC 8325 / PS 47).